We begin with the raw amino-acid sequence, 273 residues long: Putative pyruvate, phosphate dikinase regulatory protein (273 aa).

Residue 151–158 coordinates ADP; sequence GVSRTSKT.

This sequence belongs to the pyruvate, phosphate/water dikinase regulatory protein family. PDRP subfamily.

It carries out the reaction N(tele)-phospho-L-histidyl/L-threonyl-[pyruvate, phosphate dikinase] + ADP = N(tele)-phospho-L-histidyl/O-phospho-L-threonyl-[pyruvate, phosphate dikinase] + AMP + H(+). The catalysed reaction is N(tele)-phospho-L-histidyl/O-phospho-L-threonyl-[pyruvate, phosphate dikinase] + phosphate + H(+) = N(tele)-phospho-L-histidyl/L-threonyl-[pyruvate, phosphate dikinase] + diphosphate. Its function is as follows. Bifunctional serine/threonine kinase and phosphorylase involved in the regulation of the pyruvate, phosphate dikinase (PPDK) by catalyzing its phosphorylation/dephosphorylation. The chain is Putative pyruvate, phosphate dikinase regulatory protein from Desulfitobacterium hafniense (strain DSM 10664 / DCB-2).